The chain runs to 602 residues: Sulfite reductase [NADPH] hemoprotein beta-component (602 aa).

Residues 1–15 (MDDHKTASPPRERSY) are compositionally biased toward basic and acidic residues. The tract at residues 1–24 (MDDHKTASPPRERSYETPPAERPI) is disordered. [4Fe-4S] cluster-binding residues include Cys-458, Cys-464, Cys-503, and Cys-507. Cys-507 contacts siroheme.

Belongs to the nitrite and sulfite reductase 4Fe-4S domain family. As to quaternary structure, alpha(8)-beta(8). The alpha component is a flavoprotein, the beta component is a hemoprotein. The cofactor is siroheme. [4Fe-4S] cluster is required as a cofactor.

The enzyme catalyses hydrogen sulfide + 3 NADP(+) + 3 H2O = sulfite + 3 NADPH + 4 H(+). It participates in sulfur metabolism; hydrogen sulfide biosynthesis; hydrogen sulfide from sulfite (NADPH route): step 1/1. Its function is as follows. Component of the sulfite reductase complex that catalyzes the 6-electron reduction of sulfite to sulfide. This is one of several activities required for the biosynthesis of L-cysteine from sulfate. This chain is Sulfite reductase [NADPH] hemoprotein beta-component, found in Methylobacterium nodulans (strain LMG 21967 / CNCM I-2342 / ORS 2060).